The chain runs to 419 residues: Interferon regulatory factor 3 (419 aa).

Threonine 3 is subject to Phosphothreonine. A DNA-binding region (IRF tryptophan pentad repeat) is located at residues 5-111 (KPRILPWLIS…DPHKIYEFVT (107 aa)). Residue serine 14 is modified to Phosphoserine. At threonine 75 the chain carries Phosphothreonine. Phosphoserine is present on residues serine 97 and serine 123. Residues 118–137 (PEPDTSLDLSGRYSTSDTHE) are disordered. The interval 140–419 (LDKLLSGMDL…LRDLVEDMDF (280 aa)) is mediates interaction with ZDHHC11. Lysine 191 participates in a covalent cross-link: Glycyl lysine isopeptide (Lys-Gly) (interchain with G-Cter in ISG15). Residues 198–358 (DEWEFQVTVF…SWPQDEPWVK (161 aa)) form an interaction with HERC5 region. 2 positions are modified to phosphothreonine: threonine 235 and threonine 251. Cysteine 265 and cysteine 287 are joined by a disulfide. Residues lysine 358 and lysine 364 each participate in a glycyl lysine isopeptide (Lys-Gly) (interchain with G-Cter in ISG15) cross-link. N6-acetyllysine is present on lysine 364. Serine 383 is subject to Phosphoserine. A Diphosphoserine modification is found at serine 384. Phosphoserine; by TBK1 is present on serine 384. Residue serine 394 is modified to Phosphoserine; by IKKE. Serine 396 bears the Phosphoserine mark. A Phosphothreonine modification is found at threonine 402.

The protein belongs to the IRF family. In terms of assembly, monomer. Homodimer; phosphorylation-induced. Interacts (when phosphorylated) with CREBBP. Interacts with MAVS (via phosphorylated pLxIS motif). Interacts with TICAM1 (via phosphorylated pLxIS motif). Interacts with STING1 (via phosphorylated pLxIS motif). Interacts with IKBKE and TBK1. Interacts with TICAM2. Interacts with RBCK1. Interacts with HERC5. Interacts with DDX3X; the interaction allows the phosphorylation and activation of IRF3 by IKBKE. Interacts with TRIM21 and ULK1, in the presence of TRIM21; this interaction leads to IRF3 degradation by autophagy. Interacts with RIOK3; RIOK3 probably mediates the interaction of TBK1 with IRF3. Interacts with ILRUN; the interaction inhibits IRF3 binding to its DNA consensus sequence. Interacts with LYAR; this interaction impairs IRF3 DNA-binding activity. Interacts with TRAF3. Interacts with ZDHHC11; ZDHHC11 recruits IRF3 to STING1 upon DNA virus infection and thereby promotes IRF3 activation. Interacts with HSP90AA1; the interaction mediates IRF3 association with TOMM70. Interacts with BCL2; the interaction decreases upon Sendai virus infection. Interacts with BAX; the interaction is direct, increases upon virus infection and mediates the formation of the apoptosis complex TOMM70:HSP90AA1:IRF3:BAX. Interacts with DDX56. Interacts with NBR1. (Microbial infection) Interacts with Porcine epidemic diarrhea virus E protein; this interaction prevents IRF3 translocation to the nucleus and thereby prevents type I interferon production. As to quaternary structure, (Microbial infection) Interacts with African swine fever virus (ASFV) P14.5/E120R; this interaction interferes with the recruitment of IRF3 to TBK1, which in turn suppresses IRF3 phosphorylation, decreasing interferon production via the cGAS/STING pathway. In terms of assembly, (Microbial infection) Interacts with African swine fever virus (ASFV) MGF360-14L; this interaction mediates degradation of IRF3 through TRIM21 and ubiquitin-meditated proteolysis. (Microbial infection) Interacts with African swine fever virus (ASFV) E301R; this interaction inhibits nuclear translocation of IRF3 to the nucleus. As to quaternary structure, (Microbial infection) Interacts with African swine fever virus (ASFV) minor capsid protein M1249L; this interaction mediates IRF3 degradation. Constitutively phosphorylated on many Ser/Thr residues. Activated following phosphorylation by TBK1 and IKBKE. Innate adapter proteins, such as MAVS, STING1 or TICAM1, are first activated by viral RNA, cytosolic DNA, and bacterial lipopolysaccharide (LPS), respectively, leading to activation of the kinases TBK1 and IKBKE. These kinases then phosphorylate the adapter proteins on the pLxIS motif, leading to recruitment of IRF3, thereby licensing IRF3 for phosphorylation by TBK1. Phosphorylation at Ser-384 is followed by pyrophosphorylation at the same residue, promoting phosphorylation at Ser-394. Phosphorylated IRF3 dissociates from the adapter proteins, dimerizes, and then enters the nucleus to induce IFNs. Post-translationally, pyrophosphorylated by UAP1 following phosphorylation at Ser-384 by TBK1. Pyrophosphorylation promotes subsequent phosphorylation at Ser-394, leading to homodimerization of IRF3. In terms of processing, acetylation at Lys-364 by KAT8 inhibits recruimtent to promoters and transcription factor activity. Acetylation by KAT8 is promoted by phosphorylation at Ser-394. Ubiquitinated; ubiquitination involves RBCK1 leading to proteasomal degradation. Polyubiquitinated; ubiquitination involves TRIM21 leading to proteasomal degradation. Ubiquitinated by UBE3C, leading to its degradation. Deubiquitinated by USP5 on both 'Lys-48'-linked unanchored and 'Lys-63'-linked anchored polyubiquitin, leading to inhibition of antiviral innate immunity. Post-translationally, ISGylated by HERC5 resulting in sustained IRF3 activation and in the inhibition of IRF3 ubiquitination by disrupting PIN1 binding. The phosphorylation state of IRF3 does not alter ISGylation. In terms of processing, (Microbial infection) Phosphorylated by pseudorabies virus protein kinase UL13; leading to decreased IRF3 binding to the IRF3-responsive promoters and downstream ISG expression. Proteolytically cleaved by apoptotic caspases during apoptosis, leading to its inactivation. Cleavage by CASP3 during virus-induced apoptosis inactivates it, preventing cytokine overproduction.

Its subcellular location is the cytoplasm. The protein resides in the nucleus. The protein localises to the mitochondrion. Its activity is regulated as follows. In the absence of viral infection, maintained as a monomer in an autoinhibited state. Phosphorylation by TBK1 and IKBKE disrupts this autoinhibition leading to the liberation of the DNA-binding and dimerization activities and its nuclear localization where it can activate type I IFN and ISG genes. Phosphorylation and activation follow the following steps: innate adapter proteins, such as MAVS, STING1 or TICAM1, are first activated by viral RNA, cytosolic DNA and bacterial lipopolysaccharide (LPS), respectively, leading to activation of the kinases TBK1 and IKBKE. These kinases then phosphorylate the adapter proteins on their pLxIS motif, leading to recruitment of IRF3, thereby licensing IRF3 for phosphorylation by TBK1. Phosphorylated IRF3 dissociates from the adapter proteins, dimerizes, and then enters the nucleus to induce IFNs. Its function is as follows. Key transcriptional regulator of type I interferon (IFN)-dependent immune responses which plays a critical role in the innate immune response against DNA and RNA viruses. Regulates the transcription of type I IFN genes (IFN-alpha and IFN-beta) and IFN-stimulated genes (ISG) by binding to an interferon-stimulated response element (ISRE) in their promoters. Acts as a more potent activator of the IFN-beta (IFNB) gene than the IFN-alpha (IFNA) gene and plays a critical role in both the early and late phases of the IFNA/B gene induction. Found in an inactive form in the cytoplasm of uninfected cells and following viral infection, double-stranded RNA (dsRNA), or toll-like receptor (TLR) signaling, is phosphorylated by IKBKE and TBK1 kinases. This induces a conformational change, leading to its dimerization and nuclear localization and association with CREB binding protein (CREBBP) to form dsRNA-activated factor 1 (DRAF1), a complex which activates the transcription of the type I IFN and ISG genes. Can activate distinct gene expression programs in macrophages and can induce significant apoptosis in primary macrophages. This is Interferon regulatory factor 3 (IRF3) from Sus scrofa (Pig).